A 926-amino-acid chain; its full sequence is Rap guanine nucleotide exchange factor 3 (926 aa).

Serine 79 is modified (phosphoserine). In terms of domain architecture, DEP spans 110–186; the sequence is ATYPTLIRDR…RDAQFYRFPG (77 aa). The interaction with PDE3B stretch occupies residues 218-242; sequence TVALRKSPGQRTDEELDLIFEELVH. 3',5'-cyclic AMP is bound by residues 311–314 and 321–322; these read GQLA and RA. Residues 369–388 are disordered; that stretch reads TSQGAGPSRPPTPGRNRYTV. Residues 384–521 form the N-terminal Ras-GEF domain; that stretch reads NRYTVMSGTP…EQYPERRRHH (138 aa). Positions 398-422 are interaction with PDE3B; sequence ELLLEAMRPDSSAHDPTETFLSDFL. Residues serine 531 and serine 867 each carry the phosphoserine modification. The Ras-GEF domain occupies 665-892; the sequence is SAKDLAGQLT…SRISTCSEQS (228 aa).

In terms of assembly, interacts with PDE3B and PIK3R6; form a signaling complex that regulates phosphatidylinositol 3-kinase gamma in angiogenesis. As to expression, expressed at low levels in adult brain. Strongly expressed in parts of the neonatal brain, including the septum and the thalamus.

The protein localises to the cytoplasm. It localises to the membrane. Its function is as follows. Guanine nucleotide exchange factor (GEF) for RAP1A and RAP2A small GTPases that is activated by binding cAMP. Through simultaneous binding of PDE3B to RAPGEF3 and PIK3R6 is assembled in a signaling complex in which it activates the PI3K gamma complex and which is involved in angiogenesis. Plays a role in the modulation of the cAMP-induced dynamic control of endothelial barrier function through a pathway that is independent on Rho-mediated signaling. Required for the actin rearrangement at cell-cell junctions, such as stress fibers and junctional actin. The sequence is that of Rap guanine nucleotide exchange factor 3 (Rapgef3) from Rattus norvegicus (Rat).